The following is a 137-amino-acid chain: Probable 4-amino-4-deoxy-L-arabinose-phosphoundecaprenol flippase subunit ArnF (137 aa).

A run of 3 helical transmembrane segments spans residues 43–63 (AIAV…FWLL), 74–94 (YSLL…LPFF), and 98–118 (FTVS…TINL).

This sequence belongs to the ArnF family. In terms of assembly, heterodimer of ArnE and ArnF.

It localises to the cell inner membrane. Its pathway is bacterial outer membrane biogenesis; lipopolysaccharide biosynthesis. Translocates 4-amino-4-deoxy-L-arabinose-phosphoundecaprenol (alpha-L-Ara4N-phosphoundecaprenol) from the cytoplasmic to the periplasmic side of the inner membrane. The sequence is that of Probable 4-amino-4-deoxy-L-arabinose-phosphoundecaprenol flippase subunit ArnF from Pseudomonas savastanoi pv. phaseolicola (strain 1448A / Race 6) (Pseudomonas syringae pv. phaseolicola (strain 1448A / Race 6)).